The chain runs to 286 residues: Beta-lactamase SHV-3 (286 aa).

The first 21 residues, 1 to 21 (MRYIRLCIISLLATLPLAVHA), serve as a signal peptide directing secretion. The Acyl-ester intermediate role is filled by Ser-66. Cys-73 and Cys-119 are oxidised to a cystine. The active-site Proton acceptor is Glu-164. 230–232 (KTG) provides a ligand contact to substrate.

This sequence belongs to the class-A beta-lactamase family.

The catalysed reaction is a beta-lactam + H2O = a substituted beta-amino acid. This enzyme hydrolyzes cefotaxime, ceftazidime and other broad spectrum cephalosporins. This chain is Beta-lactamase SHV-3 (bla), found in Klebsiella pneumoniae.